The following is a 475-amino-acid chain: Aspartyl/glutamyl-tRNA(Asn/Gln) amidotransferase subunit B (475 aa).

This sequence belongs to the GatB/GatE family. GatB subfamily. In terms of assembly, heterotrimer of A, B and C subunits.

It carries out the reaction L-glutamyl-tRNA(Gln) + L-glutamine + ATP + H2O = L-glutaminyl-tRNA(Gln) + L-glutamate + ADP + phosphate + H(+). It catalyses the reaction L-aspartyl-tRNA(Asn) + L-glutamine + ATP + H2O = L-asparaginyl-tRNA(Asn) + L-glutamate + ADP + phosphate + 2 H(+). Allows the formation of correctly charged Asn-tRNA(Asn) or Gln-tRNA(Gln) through the transamidation of misacylated Asp-tRNA(Asn) or Glu-tRNA(Gln) in organisms which lack either or both of asparaginyl-tRNA or glutaminyl-tRNA synthetases. The reaction takes place in the presence of glutamine and ATP through an activated phospho-Asp-tRNA(Asn) or phospho-Glu-tRNA(Gln). The protein is Aspartyl/glutamyl-tRNA(Asn/Gln) amidotransferase subunit B of Bacillus anthracis (strain A0248).